The primary structure comprises 1015 residues: Condensin complex subunit 3 (1015 aa).

5 HEAT repeats span residues 94 to 131 (GLLN…SMPE), 138 to 173 (DVFD…QDPK), 174 to 212 (DDEC…TLPK), 238 to 275 (MRAM…GWLR), and 276 to 313 (FSEG…LSEL). Position 390 is a phosphoserine (Ser-390). HEAT repeat units lie at residues 399 to 436 (EFIG…LPTI), 439 to 478 (SLVS…TVGV), and 617 to 654 (DFAR…TFGI). A Phosphoserine modification is found at Ser-674. HEAT repeat units lie at residues 687–724 (ATAK…SGLL) and 865–907 (KDLL…QAEA). Position 931 is a phosphothreonine (Thr-931). Residues 941 to 950 (ASKSTQLKTN) show a composition bias toward polar residues. The segment at 941-994 (ASKSTQLKTNRGQRKVTVSARTNRRCQTAEADSESDHEVPEPESEMKMRLPRRA) is disordered. Phosphoserine is present on residues Ser-973, Ser-975, Ser-1002, and Ser-1015. Over residues 974-988 (ESDHEVPEPESEMKM) the composition is skewed to basic and acidic residues.

The protein belongs to the CND3 (condensin subunit 3) family. As to quaternary structure, component of the condensin complex, which contains the SMC2 and SMC4 heterodimer, and three non SMC subunits that probably regulate the complex: NCAPH/BRRN1, NCAPD2/CAPD2 and NCAPG. In terms of processing, phosphorylated by CDK1. Its phosphorylation, as well as that of NCAPD2 and NCAPH subunits, activates the condensin complex and is required for chromosome condensation. As to expression, highly expressed in testis.

It is found in the nucleus. The protein resides in the cytoplasm. The protein localises to the chromosome. In terms of biological role, regulatory subunit of the condensin complex, a complex required for conversion of interphase chromatin into mitotic-like condense chromosomes. The condensin complex probably introduces positive supercoils into relaxed DNA in the presence of type I topoisomerases and converts nicked DNA into positive knotted forms in the presence of type II topoisomerases. This chain is Condensin complex subunit 3 (NCAPG), found in Homo sapiens (Human).